Consider the following 67-residue polypeptide: Probable Sec-independent protein translocase protein TatE (67 aa).

Residues Met-1–Gly-21 form a helical membrane-spanning segment. The interval Asp-45–Glu-67 is disordered.

This sequence belongs to the TatA/E family. TatE subfamily.

The protein localises to the cell inner membrane. Its function is as follows. Part of the twin-arginine translocation (Tat) system that transports large folded proteins containing a characteristic twin-arginine motif in their signal peptide across membranes. TatE shares overlapping functions with TatA. This is Probable Sec-independent protein translocase protein TatE from Escherichia fergusonii (strain ATCC 35469 / DSM 13698 / CCUG 18766 / IAM 14443 / JCM 21226 / LMG 7866 / NBRC 102419 / NCTC 12128 / CDC 0568-73).